The following is a 521-amino-acid chain: Glutamyl-tRNA(Gln) amidotransferase subunit B, mitochondrial (521 aa).

The N-terminal 22 residues, Met-1–Phe-22, are a transit peptide targeting the mitochondrion.

This sequence belongs to the GatB/GatE family. GatB subfamily. In terms of assembly, subunit of the heterotrimeric GatCAB amidotransferase (AdT) complex, composed of A, B and C subunits.

It localises to the mitochondrion. The enzyme catalyses L-glutamyl-tRNA(Gln) + L-glutamine + ATP + H2O = L-glutaminyl-tRNA(Gln) + L-glutamate + ADP + phosphate + H(+). Its function is as follows. Allows the formation of correctly charged Gln-tRNA(Gln) through the transamidation of misacylated Glu-tRNA(Gln) in the mitochondria. The reaction takes place in the presence of glutamine and ATP through an activated gamma-phospho-Glu-tRNA(Gln). The chain is Glutamyl-tRNA(Gln) amidotransferase subunit B, mitochondrial from Cryptococcus neoformans var. neoformans serotype D (strain JEC21 / ATCC MYA-565) (Filobasidiella neoformans).